The sequence spans 287 residues: Probable endonuclease 4 (287 aa).

Positions 69, 109, 144, 178, 181, 215, 228, 230, and 260 each coordinate Zn(2+).

The protein belongs to the AP endonuclease 2 family. Requires Zn(2+) as cofactor.

It catalyses the reaction Endonucleolytic cleavage to 5'-phosphooligonucleotide end-products.. Its function is as follows. Endonuclease IV plays a role in DNA repair. It cleaves phosphodiester bonds at apurinic or apyrimidinic (AP) sites, generating a 3'-hydroxyl group and a 5'-terminal sugar phosphate. The protein is Probable endonuclease 4 of Thermotoga maritima (strain ATCC 43589 / DSM 3109 / JCM 10099 / NBRC 100826 / MSB8).